A 540-amino-acid polypeptide reads, in one-letter code: 2-isopropylmalate synthase (540 aa).

The 264-residue stretch at V8–S271 folds into the Pyruvate carboxyltransferase domain. Mn(2+)-binding residues include D17, H208, H210, and N244. Residues Q408 to I540 form a regulatory domain region.

It belongs to the alpha-IPM synthase/homocitrate synthase family. LeuA type 1 subfamily. Homodimer. Mn(2+) serves as cofactor.

It localises to the cytoplasm. The enzyme catalyses 3-methyl-2-oxobutanoate + acetyl-CoA + H2O = (2S)-2-isopropylmalate + CoA + H(+). The protein operates within amino-acid biosynthesis; L-leucine biosynthesis; L-leucine from 3-methyl-2-oxobutanoate: step 1/4. Functionally, catalyzes the condensation of the acetyl group of acetyl-CoA with 3-methyl-2-oxobutanoate (2-ketoisovalerate) to form 3-carboxy-3-hydroxy-4-methylpentanoate (2-isopropylmalate). This chain is 2-isopropylmalate synthase, found in Prochlorococcus marinus (strain MIT 9303).